The following is a 445-amino-acid chain: Tubulin alpha-1 chain (445 aa).

Glutamine 11 contributes to the GTP binding site. N6-acetyllysine is present on lysine 40. Positions 71, 140, 144, 145, 179, 206, and 228 each coordinate GTP. Residue glutamate 71 participates in Mg(2+) binding. The active site involves glutamate 254.

Belongs to the tubulin family. In terms of assembly, dimer of alpha and beta chains. A typical microtubule is a hollow water-filled tube with an outer diameter of 25 nm and an inner diameter of 15 nM. Alpha-beta heterodimers associate head-to-tail to form protofilaments running lengthwise along the microtubule wall with the beta-tubulin subunit facing the microtubule plus end conferring a structural polarity. Microtubules usually have 13 protofilaments but different protofilament numbers can be found in some organisms and specialized cells. It depends on Mg(2+) as a cofactor. Post-translationally, acetylation of alpha chains at Lys-40 stabilizes microtubules and affects affinity and processivity of microtubule motors. This modification has a role in multiple cellular functions, ranging from cell motility, cell cycle progression or cell differentiation to intracellular trafficking and signaling.

It localises to the cytoplasm. The protein localises to the cytoskeleton. It carries out the reaction GTP + H2O = GDP + phosphate + H(+). Functionally, tubulin is the major constituent of microtubules, a cylinder consisting of laterally associated linear protofilaments composed of alpha- and beta-tubulin heterodimers. Microtubules grow by the addition of GTP-tubulin dimers to the microtubule end, where a stabilizing cap forms. Below the cap, tubulin dimers are in GDP-bound state, owing to GTPase activity of alpha-tubulin. The sequence is that of Tubulin alpha-1 chain from Stylonychia lemnae (Ciliate).